A 475-amino-acid chain; its full sequence is Cytosolic non-specific dipeptidase (475 aa).

Position 9 is an N6-acetyllysine (Lys9). Position 58 is a phosphoserine (Ser58). Mn(2+) is bound at residue His99. Residue Asp101 is part of the active site. Asp132 is a Mn(2+) binding site. Glu166 serves as the catalytic Proton acceptor. Substrate-binding positions include 166–167, Asp195, His228, Thr330, Arg343, Ser417, and His445; that span reads EE. 2 residues coordinate Mn(2+): Glu167 and Asp195. Mn(2+) is bound at residue His445.

The protein belongs to the peptidase M20A family. Homodimer. Mn(2+) is required as a cofactor.

It is found in the cytoplasm. The enzyme catalyses Hydrolysis of dipeptides, preferentially hydrophobic dipeptides including prolyl amino acids.. It catalyses the reaction L-threonyl-L-threonine + H2O = 2 L-threonine. The catalysed reaction is L-threonyl-L-serine + H2O = L-threonine + L-serine. It carries out the reaction L-seryl-L-threonine + H2O = L-threonine + L-serine. The enzyme catalyses L-cysteinylglycine + H2O = L-cysteine + glycine. It catalyses the reaction L-alanyl-L-cysteine + H2O = L-cysteine + L-alanine. The catalysed reaction is (S)-lactate + L-phenylalanine = N-[(S)-lactoyl]-L-phenylalanine + H2O. In terms of biological role, catalyzes the peptide bond hydrolysis in dipeptides, displaying a non-redundant activity toward threonyl dipeptides. Mediates threonyl dipeptide catabolism in a tissue-specific way. Has high dipeptidase activity toward cysteinylglycine, an intermediate metabolite in glutathione metabolism. Metabolizes N-lactoyl-amino acids, both through hydrolysis to form lactic acid and amino acids, as well as through their formation by reverse proteolysis. Plays a role in the regulation of cell cycle arrest and apoptosis. The sequence is that of Cytosolic non-specific dipeptidase (CNDP2) from Bos taurus (Bovine).